The sequence spans 443 residues: Ribosomal protein uS12 methylthiotransferase RimO (443 aa).

In terms of domain architecture, MTTase N-terminal spans 10–120; that stretch reads PRVGFVSLGC…VVKAVHQHLP (111 aa). Residues C19, C55, C84, C151, C155, and C158 each contribute to the [4Fe-4S] cluster site. The Radical SAM core domain occupies 137 to 375; it reads LTPAHYAYLK…DFQEDISTQR (239 aa). The TRAM domain maps to 377–443; it reads ERWIGRDITV…VHDLYARPLP (67 aa).

Belongs to the methylthiotransferase family. RimO subfamily. Requires [4Fe-4S] cluster as cofactor.

It localises to the cytoplasm. The enzyme catalyses L-aspartate(89)-[ribosomal protein uS12]-hydrogen + (sulfur carrier)-SH + AH2 + 2 S-adenosyl-L-methionine = 3-methylsulfanyl-L-aspartate(89)-[ribosomal protein uS12]-hydrogen + (sulfur carrier)-H + 5'-deoxyadenosine + L-methionine + A + S-adenosyl-L-homocysteine + 2 H(+). Functionally, catalyzes the methylthiolation of an aspartic acid residue of ribosomal protein uS12. The polypeptide is Ribosomal protein uS12 methylthiotransferase RimO (Aromatoleum aromaticum (strain DSM 19018 / LMG 30748 / EbN1) (Azoarcus sp. (strain EbN1))).